Reading from the N-terminus, the 394-residue chain is Glycogen synthase kinase 1 (394 aa).

In terms of domain architecture, Protein kinase spans 35–318 (YTQCKIVGNG…AIDAMVHPFF (284 aa)). ATP contacts are provided by residues 41 to 49 (VGNGSFGVV) and Lys-64.

The protein belongs to the protein kinase superfamily. CMGC Ser/Thr protein kinase family. GSK-3 subfamily.

It localises to the cytoplasm. It carries out the reaction L-seryl-[protein] + ATP = O-phospho-L-seryl-[protein] + ADP + H(+). In terms of biological role, protein kinase that acts downstream of the MPS1 MAPK cascade as a highly conservative signal modulator that dictates growth, conidiation and pathogenicity. Phosphorylates HAT1 at 'Ser-8' to block its translocation from the nucleus to the cytoplasm where HAT1 positively regulates appressorium development and pathogenicity. The chain is Glycogen synthase kinase 1 from Pyricularia oryzae (Rice blast fungus).